The primary structure comprises 163 residues: Nucleotide-binding protein YajQ (163 aa).

Belongs to the YajQ family.

Nucleotide-binding protein. This Salmonella agona (strain SL483) protein is Nucleotide-binding protein YajQ.